Reading from the N-terminus, the 341-residue chain is Uroporphyrinogen decarboxylase (341 aa).

Residues 25–29 (RQAGR), Phe44, Asp74, Tyr151, Ser206, and His318 contribute to the substrate site.

The protein belongs to the uroporphyrinogen decarboxylase family. As to quaternary structure, homodimer.

The protein resides in the cytoplasm. It catalyses the reaction uroporphyrinogen III + 4 H(+) = coproporphyrinogen III + 4 CO2. It participates in porphyrin-containing compound metabolism; protoporphyrin-IX biosynthesis; coproporphyrinogen-III from 5-aminolevulinate: step 4/4. Its function is as follows. Catalyzes the decarboxylation of four acetate groups of uroporphyrinogen-III to yield coproporphyrinogen-III. This Flavobacterium johnsoniae (strain ATCC 17061 / DSM 2064 / JCM 8514 / BCRC 14874 / CCUG 350202 / NBRC 14942 / NCIMB 11054 / UW101) (Cytophaga johnsonae) protein is Uroporphyrinogen decarboxylase.